The sequence spans 604 residues: UvrABC system protein C (604 aa).

The region spanning 13 to 92 (ASPGVYLMKD…IKKYHPKYNV (80 aa)) is the GIY-YIG domain. One can recognise a UVR domain in the interval 205-240 (SEIVQDLEKSIEKASKEQKFEQAGMYYRTLKLIQQA).

It belongs to the UvrC family. As to quaternary structure, interacts with UvrB in an incision complex.

Its subcellular location is the cytoplasm. Functionally, the UvrABC repair system catalyzes the recognition and processing of DNA lesions. UvrC both incises the 5' and 3' sides of the lesion. The N-terminal half is responsible for the 3' incision and the C-terminal half is responsible for the 5' incision. This Chlamydia abortus (strain DSM 27085 / S26/3) (Chlamydophila abortus) protein is UvrABC system protein C.